We begin with the raw amino-acid sequence, 290 residues long: MPADTGMEKPTASPIAGAPASASHTPDKPRSASEHRKSSKPIMEKRRRARINESLGQLKMLILDALKKDSSRHSKLEKADILEMTVKHLRNLQRAQMAAALSADPSVLGKYRAGFNECMNEVTRFLSTCEGVNADVRARLLGHLSACLGQIVAMNYLPPPPAGQPAHLAQPLHVQLPPTTTGAVPVPCKLEPTEALSPKVYGGFQLVPATDGQFAFLIPNPAFPPGSGPVIPLYANANVPVSTAWRSSERVHPPAGIPGAGLDIIWARVVPASQAGSPIAERREAVWRPW.

Residues 1 to 47 (MPADTGMEKPTASPIAGAPASASHTPDKPRSASEHRKSSKPIMEKRR) form a disordered region. Residues 10 to 23 (PTASPIAGAPASAS) are compositionally biased toward low complexity. Positions 25–36 (TPDKPRSASEHR) are enriched in basic and acidic residues. A bHLH domain is found at 35–92 (HRKSSKPIMEKRRRARINESLGQLKMLILDALKKDSSRHSKLEKADILEMTVKHLRNL). The 34-residue stretch at 111 to 144 (YRAGFNECMNEVTRFLSTCEGVNADVRARLLGHL) folds into the Orange domain. Residues 287–290 (WRPW) carry the WRPW motif motif.

In terms of assembly, transcription repression requires formation of a complex with a corepressor protein of the Groucho/TLE family.

The protein resides in the nucleus. Functionally, transcriptional repressor of genes that require a bHLH protein for their transcription. May act as a negative regulator of myogenesis by inhibiting the functions of MYOD1 and ASH1. The sequence is that of Transcription factor HES-1 (HES1) from Gallus gallus (Chicken).